A 620-amino-acid chain; its full sequence is MTTTDTAPQSQPFQAEVAELLNLMVHSVYSETDIFLRELISNASDALDKLRYESIAKPELMADGGEPKIRILPKKEPDTLSVIDNGLGMDRQELIDNLGTIAKSGTKSFLTKLTEAKDGAGLIGQFGVGFYAAFMVADRIVVTSRRARSAEAWTWSSSGGAGFEIAPASEEDAARVTRGTEIVLHLKKDAAKYLEPYEIERVVGAYSDNIQFPIELVPEEGEPRQINSASALWQRSKSELTAEDYSQAYKQIAGAFDEPAMTLHYRAEGRYSYAVLLFAPSTKPFDLFEPARKGRVKLYVRRVFITDEADLLPSYLRFIRGVIDSEDLPLNLSREMLQNNPQLAQIRKAVTGKVIGELESLGDKDPEAFGKIWDAFGLVIKEGIWEDYERRDKLLALSRFTTTKGENRTLKQYVEDLKENQTEIYYLVGDSIERLKSNPKLESAAARGIEVLLLTDPVDAFWTSAPLDFGGKPLKSLSQGDVDFGQIPTTEENKDEQAKPETDEALTIAAIKDALGDKVSDVRASQRLTASASCLVAGGLGPDRALERMLAQQNRGAASKPILEVNLRHPIVAAVAKANAADAADLSLLLLEQAQILDGELPEDPAAFSARLNRLVLRAL.

The a; substrate-binding stretch occupies residues Met-1 to Arg-334. The interval Glu-335–Arg-548 is b. A c region spans residues Met-549–Leu-620.

Belongs to the heat shock protein 90 family. In terms of assembly, homodimer.

The protein localises to the cytoplasm. Its function is as follows. Molecular chaperone. Has ATPase activity. The polypeptide is Chaperone protein HtpG (Rhodopseudomonas palustris (strain BisB18)).